A 35-amino-acid polypeptide reads, in one-letter code: Kappa-theraphotoxin-Tb1a (35 aa).

3 disulfides stabilise this stretch: C3–C18, C10–C23, and C17–C30.

It belongs to the neurotoxin 10 (Hwtx-1) family. 59 (Tltx) subfamily. Monomer. As to expression, expressed by the venom gland.

The protein resides in the secreted. In terms of biological role, blocks Kv4.2/KCND2 voltage-gated potassium channels (IC(50) is 193.0 nM) by shifting the voltage-dependence of channel activation to more depolarized potentials. The toxin is thought to bind to the S3-S4 linker region of the voltage sensor domain. This chain is Kappa-theraphotoxin-Tb1a, found in Theraphosa blondi (Goliath birdeating spider).